Here is a 242-residue protein sequence, read N- to C-terminus: Megakaryocyte and platelet inhibitory receptor G6b (242 aa).

The first 17 residues, 1–17, serve as a signal peptide directing secretion; that stretch reads MALVLPLLPLLLSKVQG. N32 and N112 each carry an N-linked (GlcNAc...) asparagine glycan. A helical transmembrane segment spans residues 141-161; the sequence is VLIPLLGVGLVLGLGVAGVVW. 2 short sequence motifs (ITIM motif) span residues 210–215 and 236–241; these read LHYADL and TVYAVV. Y212 carries the post-translational modification Phosphotyrosine.

In terms of assembly, interacts (via ITIM motif) with PTPN6 and PTPN11. Binds to heparin. N-glycosylated. Post-translationally, may be O-glycosylated. In terms of processing, phosphorylated. Expressed in mature megakaryocytes and platelets. Not expressed by immature megakaryocytes.

The protein localises to the cell membrane. Functionally, inhibitory receptor that acts as a critical regulator of hematopoietic lineage differentiation, megakaryocyte function and platelet production. Inhibits platelet aggregation and activation by agonists such as ADP and collagen-related peptide. This regulation of megakaryocate function as well as platelet production ann activation is done through the inhibition (via the 2 ITIM motifs) of the receptors CLEC1B and GP6:FcRgamma signaling. Appears to operate in a calcium-independent manner. The polypeptide is Megakaryocyte and platelet inhibitory receptor G6b (Mus musculus (Mouse)).